A 486-amino-acid chain; its full sequence is Probable glycine dehydrogenase (decarboxylating) subunit 2 (486 aa).

Lys269 is subject to N6-(pyridoxal phosphate)lysine.

The protein belongs to the GcvP family. C-terminal subunit subfamily. In terms of assembly, the glycine cleavage system is composed of four proteins: P, T, L and H. In this organism, the P 'protein' is a heterodimer of two subunits. Pyridoxal 5'-phosphate is required as a cofactor.

The catalysed reaction is N(6)-[(R)-lipoyl]-L-lysyl-[glycine-cleavage complex H protein] + glycine + H(+) = N(6)-[(R)-S(8)-aminomethyldihydrolipoyl]-L-lysyl-[glycine-cleavage complex H protein] + CO2. In terms of biological role, the glycine cleavage system catalyzes the degradation of glycine. The P protein binds the alpha-amino group of glycine through its pyridoxal phosphate cofactor; CO(2) is released and the remaining methylamine moiety is then transferred to the lipoamide cofactor of the H protein. The polypeptide is Probable glycine dehydrogenase (decarboxylating) subunit 2 (Chlorobaculum tepidum (strain ATCC 49652 / DSM 12025 / NBRC 103806 / TLS) (Chlorobium tepidum)).